Here is a 901-residue protein sequence, read N- to C-terminus: Protein translocase subunit SecA (901 aa).

ATP contacts are provided by residues Gln87, 105–109 (GEGKT), and Asp512. Residues Cys885, Cys887, Cys896, and His897 each coordinate Zn(2+).

It belongs to the SecA family. In terms of assembly, monomer and homodimer. Part of the essential Sec protein translocation apparatus which comprises SecA, SecYEG and auxiliary proteins SecDF-YajC and YidC. It depends on Zn(2+) as a cofactor.

The protein localises to the cell inner membrane. Its subcellular location is the cytoplasm. The catalysed reaction is ATP + H2O + cellular proteinSide 1 = ADP + phosphate + cellular proteinSide 2.. Its function is as follows. Part of the Sec protein translocase complex. Interacts with the SecYEG preprotein conducting channel. Has a central role in coupling the hydrolysis of ATP to the transfer of proteins into and across the cell membrane, serving both as a receptor for the preprotein-SecB complex and as an ATP-driven molecular motor driving the stepwise translocation of polypeptide chains across the membrane. The polypeptide is Protein translocase subunit SecA (Salmonella agona (strain SL483)).